Reading from the N-terminus, the 408-residue chain is NADH-quinone oxidoreductase subunit D (408 aa).

The protein belongs to the complex I 49 kDa subunit family. In terms of assembly, NDH-1 is composed of 14 different subunits. Subunits NuoB, C, D, E, F, and G constitute the peripheral sector of the complex.

It localises to the cell inner membrane. The catalysed reaction is a quinone + NADH + 5 H(+)(in) = a quinol + NAD(+) + 4 H(+)(out). Functionally, NDH-1 shuttles electrons from NADH, via FMN and iron-sulfur (Fe-S) centers, to quinones in the respiratory chain. The immediate electron acceptor for the enzyme in this species is believed to be ubiquinone. Couples the redox reaction to proton translocation (for every two electrons transferred, four hydrogen ions are translocated across the cytoplasmic membrane), and thus conserves the redox energy in a proton gradient. This Campylobacter jejuni subsp. doylei (strain ATCC BAA-1458 / RM4099 / 269.97) protein is NADH-quinone oxidoreductase subunit D.